Here is a 341-residue protein sequence, read N- to C-terminus: Ketol-acid reductoisomerase (NADP(+)) (341 aa).

Residues 1 to 182 enclose the KARI N-terminal Rossmann domain; that stretch reads MATIYYDKDA…GCTRAGVLET (182 aa). NADP(+) contacts are provided by residues 25–28, S51, S53, and 83–86; these read YGSQ and DQTQ. H108 is an active-site residue. G134 contributes to the NADP(+) binding site. One can recognise a KARI C-terminal knotted domain in the interval 183 to 328; it reads TFKEETETDL…KRLRDMMSWI (146 aa). Positions 191, 195, 227, and 231 each coordinate Mg(2+). S252 is a binding site for substrate.

It belongs to the ketol-acid reductoisomerase family. It depends on Mg(2+) as a cofactor.

The catalysed reaction is (2R)-2,3-dihydroxy-3-methylbutanoate + NADP(+) = (2S)-2-acetolactate + NADPH + H(+). It carries out the reaction (2R,3R)-2,3-dihydroxy-3-methylpentanoate + NADP(+) = (S)-2-ethyl-2-hydroxy-3-oxobutanoate + NADPH + H(+). It participates in amino-acid biosynthesis; L-isoleucine biosynthesis; L-isoleucine from 2-oxobutanoate: step 2/4. It functions in the pathway amino-acid biosynthesis; L-valine biosynthesis; L-valine from pyruvate: step 2/4. Its function is as follows. Involved in the biosynthesis of branched-chain amino acids (BCAA). Catalyzes an alkyl-migration followed by a ketol-acid reduction of (S)-2-acetolactate (S2AL) to yield (R)-2,3-dihydroxy-isovalerate. In the isomerase reaction, S2AL is rearranged via a Mg-dependent methyl migration to produce 3-hydroxy-3-methyl-2-ketobutyrate (HMKB). In the reductase reaction, this 2-ketoacid undergoes a metal-dependent reduction by NADPH to yield (R)-2,3-dihydroxy-isovalerate. This is Ketol-acid reductoisomerase (NADP(+)) from Anaeromyxobacter dehalogenans (strain 2CP-C).